A 390-amino-acid polypeptide reads, in one-letter code: Formamidopyrimidine-DNA glycosylase (390 aa).

The active-site Schiff-base intermediate with DNA is the Pro-2. Glu-3 acts as the Proton donor in catalysis. Catalysis depends on Lys-60, which acts as the Proton donor; for beta-elimination activity. Positions 107, 126, 167, and 186 each coordinate DNA. A disordered region spans residues 283 to 390 (AEKAAKVRPA…AGKKPKGRKS (108 aa)). Residues 301–316 (DDGDGEEDEQETEKED) show a composition bias toward acidic residues. Residues 321–337 (SKKGQKPRGGRGKKPAS) show a composition bias toward basic residues. The segment covering 343–355 (ESDDDGDDSEAEE) has biased composition (acidic residues). The segment covering 360 to 370 (PKGRGTKPAIK) has biased composition (basic residues).

This sequence belongs to the FPG family. In terms of assembly, monomer. In terms of tissue distribution, expressed in leaves (at protein levels).

It localises to the nucleus. It catalyses the reaction Hydrolysis of DNA containing ring-opened 7-methylguanine residues, releasing 2,6-diamino-4-hydroxy-5-(N-methyl)formamidopyrimidine.. The enzyme catalyses 2'-deoxyribonucleotide-(2'-deoxyribose 5'-phosphate)-2'-deoxyribonucleotide-DNA = a 3'-end 2'-deoxyribonucleotide-(2,3-dehydro-2,3-deoxyribose 5'-phosphate)-DNA + a 5'-end 5'-phospho-2'-deoxyribonucleoside-DNA + H(+). Its function is as follows. Involved in base excision repair of DNA damaged by oxidation or by mutagenic agents. Acts as a DNA glycosylase that recognizes and removes damaged bases. Can process efficiently 4,6-diamino-5-formamidopyrimidine (FapyA), 2,6-diamino-4- hydroxy-5-formamidopyrimidine (FapyG) and the further oxidation products of 8-oxoguanine (8-oxoG), such as guanidinohydantoin and spiroiminodihydantoin. Has marginal activity towards 8-oxoG. Has AP (apurinic/apyrimidinic) lyase activity. Cleaves the DNA backbone by beta-delta elimination to generate a single-strand break at the site of the removed base with both 3'- and 5'-phosphates. The polypeptide is Formamidopyrimidine-DNA glycosylase (FPG1) (Arabidopsis thaliana (Mouse-ear cress)).